A 341-amino-acid chain; its full sequence is MKALSKLKAEEGIWMTDVPLPALGHNDIMIKIRKAAICGTDVHIYNWDTWSQKTIPVPMVVGHEYVGEVVAVGQEVRGFRIGDRVSGEGHITCGHCRNCRAGRTHLCRNTIGVGVNRQGAFAEYLVIPAFNAFKIPDNIPDALAAIFDPFGNAVHTALSFDLVGEDVLVSGAGPIGIMAAAVCRHVGARHVVITDVNDYRLDLARKMGVTRAVNVSRESLPEVMQALGMSEGFDVGLEMSGAPPAFHTMLDTMNHGGKIAMLGIPPGDMAIDWNQVIFKGLLIKGIYGREMFETWYKMAALIQSGLDLTPIITHQYAIDDFQKGFDVMRSGHSGKVILNWS.

Cys38 serves as a coordination point for Zn(2+). Active-site charge relay system residues include Thr40 and His43. Zn(2+) is bound by residues His63, Glu64, Cys93, Cys96, Cys99, and Cys107. NAD(+) contacts are provided by residues Ile175, Asp195, Arg200, 262–264 (LGI), and 286–287 (IY).

This sequence belongs to the zinc-containing alcohol dehydrogenase family. In terms of assembly, homotetramer. The cofactor is Zn(2+).

The protein localises to the cytoplasm. The enzyme catalyses L-threonine + NAD(+) = (2S)-2-amino-3-oxobutanoate + NADH + H(+). It functions in the pathway amino-acid degradation; L-threonine degradation via oxydo-reductase pathway; glycine from L-threonine: step 1/2. Catalyzes the NAD(+)-dependent oxidation of L-threonine to 2-amino-3-ketobutyrate. This chain is L-threonine 3-dehydrogenase, found in Edwardsiella ictaluri (strain 93-146).